The chain runs to 218 residues: Small ribosomal subunit protein uS3 (218 aa).

The region spanning 38–106 is the KH type-2 domain; that stretch reads LRNDLKKKLM…PVHLNIEEVK (69 aa).

This sequence belongs to the universal ribosomal protein uS3 family. In terms of assembly, part of the 30S ribosomal subunit. Forms a tight complex with proteins S10 and S14.

Functionally, binds the lower part of the 30S subunit head. Binds mRNA in the 70S ribosome, positioning it for translation. This chain is Small ribosomal subunit protein uS3, found in Legionella pneumophila (strain Paris).